The following is a 263-amino-acid chain: HTH-type transcriptional repressor NanR (263 aa).

The segment at 1-22 (MGLMNAFDSQTEDSSPAIGRNL) is disordered. The HTH gntR-type domain occupies 30–98 (KKLSEMVEEE…NGERARVSRP (69 aa)). Residues 58 to 77 (ERELMAFFNVGRPSVREALA) constitute a DNA-binding region (H-T-H motif).

Belongs to the NanR family.

Functionally, transcriptional repressor that controls expression of the genes required for the catabolism of sialic acids. The sequence is that of HTH-type transcriptional repressor NanR from Escherichia coli (strain 55989 / EAEC).